The chain runs to 324 residues: Dermonecrotic toxin Hl-PLD1 (324 aa).

The N-terminal stretch at Met1–Gly35 is a signal peptide. His50 is a catalytic residue. 2 residues coordinate Mg(2+): Glu70 and Asp72. Catalysis depends on His86, which acts as the Nucleophile. Intrachain disulfides connect Cys90–Cys96 and Cys92–Cys236. Asp130 is a binding site for Mg(2+).

This sequence belongs to the arthropod phospholipase D family. Class II subfamily. Mg(2+) serves as cofactor. Expressed by the venom gland.

It is found in the secreted. The enzyme catalyses an N-(acyl)-sphingosylphosphocholine = an N-(acyl)-sphingosyl-1,3-cyclic phosphate + choline. It carries out the reaction an N-(acyl)-sphingosylphosphoethanolamine = an N-(acyl)-sphingosyl-1,3-cyclic phosphate + ethanolamine. It catalyses the reaction a 1-acyl-sn-glycero-3-phosphocholine = a 1-acyl-sn-glycero-2,3-cyclic phosphate + choline. The catalysed reaction is a 1-acyl-sn-glycero-3-phosphoethanolamine = a 1-acyl-sn-glycero-2,3-cyclic phosphate + ethanolamine. Functionally, dermonecrotic toxins cleave the phosphodiester linkage between the phosphate and headgroup of certain phospholipids (sphingolipid and lysolipid substrates), forming an alcohol (often choline) and a cyclic phosphate. This toxin acts on sphingomyelin (SM) with a high activity. It may also act on ceramide phosphoethanolamine (CPE), lysophosphatidylcholine (LPC) and lysophosphatidylethanolamine (LPE), but not on lysophosphatidylserine (LPS), and lysophosphatidylglycerol (LPG). It acts by transphosphatidylation, releasing exclusively cyclic phosphate products as second products. In vivo, shows dermonecrotic activity when intradermally injected into rabbit skin and is lethal to mice. Induces increased vascular permeability, edema, inflammatory response, and platelet aggregation. Does not show hemolytic activity (at up to 50 ug). This chain is Dermonecrotic toxin Hl-PLD1, found in Hemiscorpius lepturus (Scorpion).